Consider the following 486-residue polypeptide: Glutamyl-tRNA(Gln) amidotransferase subunit A (486 aa).

Catalysis depends on charge relay system residues Lys76 and Ser151. Ser175 functions as the Acyl-ester intermediate in the catalytic mechanism.

This sequence belongs to the amidase family. GatA subfamily. As to quaternary structure, heterotrimer of A, B and C subunits.

It catalyses the reaction L-glutamyl-tRNA(Gln) + L-glutamine + ATP + H2O = L-glutaminyl-tRNA(Gln) + L-glutamate + ADP + phosphate + H(+). Functionally, allows the formation of correctly charged Gln-tRNA(Gln) through the transamidation of misacylated Glu-tRNA(Gln) in organisms which lack glutaminyl-tRNA synthetase. The reaction takes place in the presence of glutamine and ATP through an activated gamma-phospho-Glu-tRNA(Gln). The chain is Glutamyl-tRNA(Gln) amidotransferase subunit A from Nitrosomonas eutropha (strain DSM 101675 / C91 / Nm57).